Reading from the N-terminus, the 313-residue chain is Cytochrome c biogenesis protein CcsA (313 aa).

8 consecutive transmembrane segments (helical) span residues 13–35 (ISFS…EIAG), 43–63 (GMIA…IYSG), 67–87 (LSNL…IHMI), 96–116 (FLSS…TSGL), 142–162 (MLLS…LLVI), 219–239 (VIGI…VWAN), 252–269 (ETWA…LHTR), and 280–300 (AIVA…VNLL).

Belongs to the CcmF/CycK/Ccl1/NrfE/CcsA family. As to quaternary structure, may interact with Ccs1.

It is found in the plastid. The protein localises to the chloroplast thylakoid membrane. Functionally, required during biogenesis of c-type cytochromes (cytochrome c6 and cytochrome f) at the step of heme attachment. In Amborella trichopoda, this protein is Cytochrome c biogenesis protein CcsA.